The sequence spans 88 residues: Small ribosomal subunit protein uS15 (88 aa).

The protein belongs to the universal ribosomal protein uS15 family. Part of the 30S ribosomal subunit. Forms a bridge to the 50S subunit in the 70S ribosome, contacting the 23S rRNA.

Its function is as follows. One of the primary rRNA binding proteins, it binds directly to 16S rRNA where it helps nucleate assembly of the platform of the 30S subunit by binding and bridging several RNA helices of the 16S rRNA. Forms an intersubunit bridge (bridge B4) with the 23S rRNA of the 50S subunit in the ribosome. The sequence is that of Small ribosomal subunit protein uS15 from Mycoplasma capricolum subsp. capricolum (strain California kid / ATCC 27343 / NCTC 10154).